We begin with the raw amino-acid sequence, 726 residues long: Pyrroloquinoline quinone-dependent pyranose dehydrogenase (726 aa).

The N-terminal stretch at 1-18 (MRSSSLAWALGLVALANA) is a signal peptide. 2 residues coordinate heme b: Met-83 and Tyr-108. Cys-138 and Cys-141 are oxidised to a cystine. Asn-140 is a glycosylation site (N-linked (GlcNAc...) asparagine). The heme b site is built by Arg-181 and His-182. The disordered stretch occupies residues 211-242 (PPLSGGAPTQPPTQQPPTTTAPPPPPPSSTFV). Over residues 219 to 238 (TQPPTQQPPTTTAPPPPPPS) the composition is skewed to pro residues. A disulfide bridge connects residues Cys-244 and Cys-302. Pyrroloquinoline quinone contacts are provided by Arg-273, His-363, Arg-430, and Asn-431. Ca(2+) contacts are provided by Ser-449 and Asp-451. Cys-492 and Cys-525 are disulfide-bonded. His-539 contacts pyrroloquinoline quinone. Asn-551 carries an N-linked (GlcNAc...) asparagine glycan. Pyrroloquinoline quinone is bound by residues His-560, Trp-563, and Asn-564. Cys-611 and Cys-619 are disulfide-bonded. Arg-621 is a pyrroloquinoline quinone binding site. Over residues 659–678 (ITQPPITTSPPTPTTPPVVQ) the composition is skewed to pro residues. The segment at 659–689 (ITQPPITTSPPTPTTPPVVQPPTTVAPPQAS) is disordered. Residues 679–689 (PPTTVAPPQAS) are compositionally biased toward low complexity. The 37-residue stretch at 688 to 724 (ASQTLWGQCGGQGWTGPTLCPANSVCRESNQWYSQCV) folds into the CBM1 domain.

This sequence belongs to the sugar dehydrogenase AA12 family. It depends on Ca(2+) as a cofactor. Pyrroloquinoline quinone serves as cofactor. Heme b is required as a cofactor.

It is found in the secreted. Functionally, pyrroloquinoline quinone (PPQ)-dependent oxidoreductase that catalyzes the oxidation of various sugars including L-galactose, L-gulose, D-talose, D-arabinose, D-lyxose, L-fucose and D-glucosone. Shows significant activity toward the reverse-chair conformation of pyranoses. Shows little or no activity toward abundant sugars such as D-glucose, D-fructose, cellobiose, as well L-xylose and L-glucose. This enzyme is able to direct electrical communication with electrodes, without artificial electron mediators, thus allowing direct electron transfer (DET)-type bioelectrocatalysis. Exhibits binding affinity for insoluble cellulose. PDH does not oxidize cello-oligosaccharides but is able to activate the C-1-oxidizing Neurospora crassa LPMO9F and the C-4-oxidizing Neurospora crassa LPMO9C thanks to the electron-tranfer activity of the cytochrome domain and the localization of PDH in the vicinity of the LPMO substrates by the CBM1 domain. The protein is Pyrroloquinoline quinone-dependent pyranose dehydrogenase of Coprinopsis cinerea (strain Okayama-7 / 130 / ATCC MYA-4618 / FGSC 9003) (Inky cap fungus).